The sequence spans 465 residues: Probable dipeptidase A (465 aa).

The active site involves C3.

It belongs to the peptidase C69 family.

The catalysed reaction is an L-aminoacyl-L-amino acid + H2O = 2 an L-alpha-amino acid. This chain is Probable dipeptidase A (pepDA), found in Streptococcus pyogenes serotype M3 (strain SSI-1).